Here is a 432-residue protein sequence, read N- to C-terminus: MAKNIVVIGTQWGDEGKGKLVDLLTEHANAVVRFQGGHNAGHTLVIDGRKTVLHLIPSGILRDSVTCLIGNGVVLSPEALMQEIGVLESVGLSIRDRLIVSEACALILPVHIALDNAREAARGGKAIGTTGRGIGPAYEDKVARRGLRAGDLRDTAGLPERLRELLDYHNFMLTRYYGAQGVDFQETLDSLLDLGGKICPMLGDVAGILHRYQSAGENVLFEGAQGAMLDIDHGTYPYVTSSNTTAGGASCGTGVGLLNFDYVLGITKAYATRVGNGPFPTELLDATGEILTQKGAEFGATTGRRRRCGWFDAVLMRRSAKLNGLSGICLTKLDVLDGLPRIGICTGYRYDGQEIDTVPIGADNYARCEPIIEEMPGWQESTAGIRALDDLPANARAYIRRLEETTGVNVDIISTGPDRQDTIVIQNPFAAG.

Residues 13-19 (GDEGKGK) and 41-43 (GHT) each bind GTP. The Proton acceptor role is filled by Asp-14. Mg(2+) contacts are provided by Asp-14 and Gly-41. Residues 14-17 (DEGK), 39-42 (NAGH), Thr-130, Arg-144, Gln-225, Thr-240, and Arg-304 contribute to the IMP site. His-42 serves as the catalytic Proton donor. 300-306 (ATTGRRR) is a substrate binding site. GTP is bound by residues Arg-306, 332 to 334 (KLD), and 414 to 416 (STG).

This sequence belongs to the adenylosuccinate synthetase family. As to quaternary structure, homodimer. Mg(2+) is required as a cofactor.

The protein localises to the cytoplasm. The enzyme catalyses IMP + L-aspartate + GTP = N(6)-(1,2-dicarboxyethyl)-AMP + GDP + phosphate + 2 H(+). It functions in the pathway purine metabolism; AMP biosynthesis via de novo pathway; AMP from IMP: step 1/2. Plays an important role in the de novo pathway of purine nucleotide biosynthesis. Catalyzes the first committed step in the biosynthesis of AMP from IMP. The sequence is that of Adenylosuccinate synthetase from Methylococcus capsulatus (strain ATCC 33009 / NCIMB 11132 / Bath).